We begin with the raw amino-acid sequence, 180 residues long: ATP-dependent protease subunit HslV (180 aa).

The active site involves Thr-8. Na(+) contacts are provided by Ala-165, Cys-168, and Thr-171.

This sequence belongs to the peptidase T1B family. HslV subfamily. As to quaternary structure, a double ring-shaped homohexamer of HslV is capped on each side by a ring-shaped HslU homohexamer. The assembly of the HslU/HslV complex is dependent on binding of ATP.

It is found in the cytoplasm. The enzyme catalyses ATP-dependent cleavage of peptide bonds with broad specificity.. Its activity is regulated as follows. Allosterically activated by HslU binding. In terms of biological role, protease subunit of a proteasome-like degradation complex believed to be a general protein degrading machinery. The chain is ATP-dependent protease subunit HslV from Staphylococcus epidermidis (strain ATCC 12228 / FDA PCI 1200).